The sequence spans 116 residues: MAGRSGDSDEDLLKTVRLIKFLYQSNPPPSLEGTRQARRNRRRRWRERQRQIRSISERILGTFLGRFEEPVPLPLPPLEKLTLDCNEDCGTSGTQGVGSPQILVESPAILEPGTKE.

Residues serine 5 and serine 8 each carry the phosphoserine; by host CK2 modification. Positions 18–26 (LIKFLYQSN) are homomultimerization. The interval 25-49 (SNPPPSLEGTRQARRNRRRRWRERQ) is disordered. The short motif at 34–50 (TRQARRNRRRRWRERQR) is the Nuclear localization signal and RNA-binding (RRE) element. The span at 36 to 47 (QARRNRRRRWRE) shows a compositional bias: basic residues. The Nuclear export signal and binding to XPO1 signature appears at 73-84 (LPLPPLEKLTLD). Serine 92 and serine 99 each carry phosphoserine; by host. The disordered stretch occupies residues 92–116 (SGTQGVGSPQILVESPAILEPGTKE).

Belongs to the HIV-1 REV protein family. Homomultimer; when bound to the RRE. Multimeric assembly is essential for activity and may involve XPO1. Binds to human KPNB1, XPO1, TNPO1, RANBP5 and IPO7. Interacts with the viral Integrase. Interacts with human KHDRBS1. Interacts with human NAP1; this interaction decreases Rev multimerization and stimulates its activity. Interacts with human DEAD-box helicases DDX3 and DDX24; these interactions may serve for viral RNA export to the cytoplasm and packaging, respectively. Interacts with human PSIP1; this interaction may inhibit HIV-1 DNA integration by promoting dissociation of the Integrase-LEDGF/p75 complex. In terms of processing, asymmetrically arginine dimethylated at one site by host PRMT6. Methylation impairs the RNA-binding activity and export of viral RNA from the nucleus to the cytoplasm. Post-translationally, phosphorylated by protein kinase CK2. Presence of, and maybe binding to the N-terminus of the regulatory beta subunit of CK2 is necessary for CK2-mediated Rev's phosphorylation.

It is found in the host nucleus. The protein resides in the host nucleolus. Its subcellular location is the host cytoplasm. Functionally, escorts unspliced or incompletely spliced viral pre-mRNAs (late transcripts) out of the nucleus of infected cells. These pre-mRNAs carry a recognition sequence called Rev responsive element (RRE) located in the env gene, that is not present in fully spliced viral mRNAs (early transcripts). This function is essential since most viral proteins are translated from unspliced or partially spliced pre-mRNAs which cannot exit the nucleus by the pathway used by fully processed cellular mRNAs. Rev itself is translated from a fully spliced mRNA that readily exits the nucleus. Rev's nuclear localization signal (NLS) binds directly to KPNB1/Importin beta-1 without previous binding to KPNA1/Importin alpha-1. KPNB1 binds to the GDP bound form of RAN (Ran-GDP) and targets Rev to the nucleus. In the nucleus, the conversion from Ran-GDP to Ran-GTP dissociates Rev from KPNB1 and allows Rev's binding to the RRE in viral pre-mRNAs. Rev multimerization on the RRE via cooperative assembly exposes its nuclear export signal (NES) to the surface. Rev can then form a complex with XPO1/CRM1 and Ran-GTP, leading to nuclear export of the complex. Conversion from Ran-GTP to Ran-GDP mediates dissociation of the Rev/RRE/XPO1/RAN complex, so that Rev can return to the nucleus for a subsequent round of export. Beside KPNB1, also seems to interact with TNPO1/Transportin-1, RANBP5/IPO5 and IPO7/RANBP7 for nuclear import. The nucleoporin-like HRB/RIP is an essential cofactor that probably indirectly interacts with Rev to release HIV RNAs from the perinuclear region to the cytoplasm. The polypeptide is Protein Rev (Human immunodeficiency virus type 1 group M subtype B (strain 89.6) (HIV-1)).